The following is a 58-amino-acid chain: Small ribosomal subunit protein bS21 (58 aa).

It belongs to the bacterial ribosomal protein bS21 family.

This Staphylococcus aureus (strain bovine RF122 / ET3-1) protein is Small ribosomal subunit protein bS21.